We begin with the raw amino-acid sequence, 363 residues long: Translocating chain-associated membrane protein 1-like 1 (363 aa).

Residues 1-29 (MGLRKKNARNPPVLSHEFMVQNHADMVSC) lie on the Cytoplasmic side of the membrane. A helical transmembrane segment spans residues 30–50 (VGMFFVLGLMFEGTSEMSIAF). Residues 51 to 80 (LTLQHGVVVPAEGLPSGSRTLYHYGVKDLA) are Lumenal-facing. Residues 81-101 (TVFFYMLVAIIIHATIQEYVL) traverse the membrane as a helical segment. Residues 102 to 120 (DKLSRRLQLTKGKQNKLNE) are Cytoplasmic-facing. One can recognise a TLC domain in the interval 116-324 (NKLNEAGQLS…TVWLQRWLED (209 aa)). Residues 121-141 (AGQLSVFYIVSGIWGMIILAS) form a helical membrane-spanning segment. Residues 142 to 159 (ENCLSDPTLLWKSQPHNM) lie on the Lumenal side of the membrane. Residues 160-179 (MTFQMKFFYISQLAYWFHSF) form a helical membrane-spanning segment. The Cytoplasmic segment spans residues 180–191 (PELYFQKVRKQD). A helical membrane pass occupies residues 192–214 (IPGQLIYIGLHLFHIGGAYLLYL). Residues 215–218 (NHLG) are Lumenal-facing. A helical membrane pass occupies residues 219 to 241 (LLLLMLHYAVELLSSVCSLLYFG). Over 242 to 250 (DERYQKGLS) the chain is Cytoplasmic. The helical transmembrane segment at 251 to 271 (LWPIVFISGRLVTLIVSVVTV) threads the bilayer. The Lumenal portion of the chain corresponds to 272–295 (GLHLAGTNRNGNALSGNVNVLAAK). The helical transmembrane segment at 296-316 (IAVLSSSCSIQVYITWTLTTV) threads the bilayer. Over 317 to 363 (WLQRWLEDANLHVCGRKRRSRARKGTENGVENPNRIDSPPKKKEKAP) the chain is Cytoplasmic. The segment at 338 to 363 (ARKGTENGVENPNRIDSPPKKKEKAP) is disordered. The span at 354 to 363 (SPPKKKEKAP) shows a compositional bias: basic and acidic residues.

This sequence belongs to the TRAM family.

It is found in the endoplasmic reticulum membrane. Functionally, stimulatory or required for the translocation of secretory proteins across the ER membrane. This Mus musculus (Mouse) protein is Translocating chain-associated membrane protein 1-like 1 (Tram1l1).